The primary structure comprises 540 residues: Phosphomethylpyrimidine synthase (540 aa).

Substrate contacts are provided by residues Asn-143, Met-172, Tyr-201, His-237, 257–259, 298–301, and Glu-337; these read SRG and DGLR. A Zn(2+)-binding site is contributed by His-341. Tyr-364 is a substrate binding site. A Zn(2+)-binding site is contributed by His-405. Residues Cys-485, Cys-488, and Cys-493 each coordinate [4Fe-4S] cluster.

The protein belongs to the ThiC family. Requires [4Fe-4S] cluster as cofactor.

It carries out the reaction 5-amino-1-(5-phospho-beta-D-ribosyl)imidazole + S-adenosyl-L-methionine = 4-amino-2-methyl-5-(phosphooxymethyl)pyrimidine + CO + 5'-deoxyadenosine + formate + L-methionine + 3 H(+). Its pathway is cofactor biosynthesis; thiamine diphosphate biosynthesis. Functionally, catalyzes the synthesis of the hydroxymethylpyrimidine phosphate (HMP-P) moiety of thiamine from aminoimidazole ribotide (AIR) in a radical S-adenosyl-L-methionine (SAM)-dependent reaction. The protein is Phosphomethylpyrimidine synthase of Mycobacterium avium (strain 104).